A 305-amino-acid chain; its full sequence is tRNA dimethylallyltransferase (305 aa).

11-18 lines the ATP pocket; the sequence is GPTAVGKT. A substrate-binding site is contributed by 13-18; sequence TAVGKT. Residues 36–39 form an interaction with substrate tRNA region; that stretch reads DSMQ.

Belongs to the IPP transferase family. In terms of assembly, monomer. Mg(2+) serves as cofactor.

It catalyses the reaction adenosine(37) in tRNA + dimethylallyl diphosphate = N(6)-dimethylallyladenosine(37) in tRNA + diphosphate. Functionally, catalyzes the transfer of a dimethylallyl group onto the adenine at position 37 in tRNAs that read codons beginning with uridine, leading to the formation of N6-(dimethylallyl)adenosine (i(6)A). The chain is tRNA dimethylallyltransferase from Listeria monocytogenes serotype 4b (strain CLIP80459).